The primary structure comprises 233 residues: Small ribosomal subunit protein uS3 (233 aa).

One can recognise a KH type-2 domain in the interval 39 to 108; sequence IRTALFKLLK…KLIVNVRVIE (70 aa).

This sequence belongs to the universal ribosomal protein uS3 family. In terms of assembly, part of the 30S ribosomal subunit. Forms a tight complex with proteins S10 and S14.

Its function is as follows. Binds the lower part of the 30S subunit head. Binds mRNA in the 70S ribosome, positioning it for translation. The protein is Small ribosomal subunit protein uS3 of Mycoplasma mycoides subsp. mycoides SC (strain CCUG 32753 / NCTC 10114 / PG1).